A 263-amino-acid polypeptide reads, in one-letter code: Small ribosomal subunit protein bS1c (263 aa).

S1 motif domains follow at residues 27–96, 114–178, and 192–260; these read GDIV…LSIR, DSLL…LSHR, and GNII…LSMK.

The protein belongs to the bacterial ribosomal protein bS1 family.

The protein resides in the plastid. The protein localises to the chloroplast. The sequence is that of Small ribosomal subunit protein bS1c (rps1) from Pyropia yezoensis (Susabi-nori).